The sequence spans 605 residues: Elongation factor 4 (605 aa).

The region spanning 11–193 (KRIRNFSIIA…RIVTQISPPK (183 aa)) is the tr-type G domain. GTP-binding positions include 23–28 (DHGKST) and 140–143 (NKVD).

This sequence belongs to the TRAFAC class translation factor GTPase superfamily. Classic translation factor GTPase family. LepA subfamily.

It localises to the cell membrane. The enzyme catalyses GTP + H2O = GDP + phosphate + H(+). Functionally, required for accurate and efficient protein synthesis under certain stress conditions. May act as a fidelity factor of the translation reaction, by catalyzing a one-codon backward translocation of tRNAs on improperly translocated ribosomes. Back-translocation proceeds from a post-translocation (POST) complex to a pre-translocation (PRE) complex, thus giving elongation factor G a second chance to translocate the tRNAs correctly. Binds to ribosomes in a GTP-dependent manner. The sequence is that of Elongation factor 4 from Phytoplasma australiense.